The following is an 878-amino-acid chain: DNA mismatch repair protein MutS (878 aa).

618 to 625 (GPNMGGKS) contacts ATP. Composition is skewed to basic and acidic residues over residues 800 to 811 (LEEESSRQRAEP) and 863 to 878 (GADK…ARSR). Disordered regions lie at residues 800-842 (LEEE…PDEL) and 859-878 (SGEE…ARSR).

It belongs to the DNA mismatch repair MutS family.

In terms of biological role, this protein is involved in the repair of mismatches in DNA. It is possible that it carries out the mismatch recognition step. This protein has a weak ATPase activity. This is DNA mismatch repair protein MutS from Alkalilimnicola ehrlichii (strain ATCC BAA-1101 / DSM 17681 / MLHE-1).